The primary structure comprises 259 residues: Proteasome subunit alpha (259 aa).

The disordered stretch occupies residues 226 to 259 (LAEGSATSATSATPGEAEAPATAPEGDVDTGSNG). Residues 227–250 (AEGSATSATSATPGEAEAPATAPE) show a composition bias toward low complexity.

It belongs to the peptidase T1A family. In terms of assembly, the 20S proteasome core is composed of 14 alpha and 14 beta subunits that assemble into four stacked heptameric rings, resulting in a barrel-shaped structure. The two inner rings, each composed of seven catalytic beta subunits, are sandwiched by two outer rings, each composed of seven alpha subunits. The catalytic chamber with the active sites is on the inside of the barrel. Has a gated structure, the ends of the cylinder being occluded by the N-termini of the alpha-subunits. Is capped by the proteasome-associated ATPase, ARC.

Its subcellular location is the cytoplasm. Its pathway is protein degradation; proteasomal Pup-dependent pathway. The formation of the proteasomal ATPase ARC-20S proteasome complex, likely via the docking of the C-termini of ARC into the intersubunit pockets in the alpha-rings, may trigger opening of the gate for substrate entry. Interconversion between the open-gate and close-gate conformations leads to a dynamic regulation of the 20S proteasome proteolysis activity. Its function is as follows. Component of the proteasome core, a large protease complex with broad specificity involved in protein degradation. This Streptosporangium roseum (strain ATCC 12428 / DSM 43021 / JCM 3005 / KCTC 9067 / NCIMB 10171 / NRRL 2505 / NI 9100) protein is Proteasome subunit alpha.